A 318-amino-acid chain; its full sequence is Probable arabinan endo-1,5-alpha-L-arabinosidase C (318 aa).

An N-terminal signal peptide occupies residues 1-28 (MLSFVLLLCVALVNAYSDPGACSGTCWA). Asp-30 acts as the Proton acceptor in catalysis. N-linked (GlcNAc...) asparagine glycosylation is found at Asn-72, Asn-80, and Asn-188. The active-site Proton donor is the Glu-196. Asn-277 carries N-linked (GlcNAc...) asparagine glycosylation.

This sequence belongs to the glycosyl hydrolase 43 family.

It is found in the secreted. The catalysed reaction is Endohydrolysis of (1-&gt;5)-alpha-arabinofuranosidic linkages in (1-&gt;5)-arabinans.. It participates in glycan metabolism; L-arabinan degradation. Its function is as follows. Endo-1,5-alpha-L-arabinanase involved in degradation of pectin. Its preferred substrate is linear 1,5-alpha-L-arabinan. This chain is Probable arabinan endo-1,5-alpha-L-arabinosidase C (abnC), found in Aspergillus niger (strain ATCC MYA-4892 / CBS 513.88 / FGSC A1513).